A 126-amino-acid chain; its full sequence is Glycine cleavage system H protein (126 aa).

The 82-residue stretch at 24–105 (TLTVGITDHA…AYGVWLFKIK (82 aa)) folds into the Lipoyl-binding domain. An N6-lipoyllysine modification is found at Lys65.

This sequence belongs to the GcvH family. In terms of assembly, the glycine cleavage system is composed of four proteins: P, T, L and H. (R)-lipoate is required as a cofactor.

Its function is as follows. The glycine cleavage system catalyzes the degradation of glycine. The H protein shuttles the methylamine group of glycine from the P protein to the T protein. The protein is Glycine cleavage system H protein of Burkholderia cenocepacia (strain ATCC BAA-245 / DSM 16553 / LMG 16656 / NCTC 13227 / J2315 / CF5610) (Burkholderia cepacia (strain J2315)).